A 1028-amino-acid chain; its full sequence is U2 snRNP-associated SURP motif-containing protein (1028 aa).

2 disordered regions span residues 1-111 and 141-272; these read MADK…EDEK and VNAA…DPST. Ala-2 bears the N-acetylalanine mark. Polar residues predominate over residues 7-16; the sequence is GGSQKASSKT. Positions 45 to 54 are enriched in basic residues; the sequence is TRPKSPRKHN. The segment covering 55 to 64 has biased composition (basic and acidic residues); that stretch reads YRNESARESL. Phosphoserine is present on Ser-67. Lys-80 is covalently cross-linked (Glycyl lysine isopeptide (Lys-Gly) (interchain with G-Cter in SUMO2)). The stretch at 92-121 forms a coiled coil; that stretch reads AKRTLSKKEQEELKKKEDEKAAAEIYEEFL. 2 stretches are compositionally biased toward basic and acidic residues: residues 97–111 and 144–155; these read SKKE…EDEK and AKEEHETDEKRG. Glycyl lysine isopeptide (Lys-Gly) (interchain with G-Cter in SUMO2) cross-links involve residues Lys-145 and Lys-168. Polar residues predominate over residues 169–178; the sequence is NPPNQSSNER. Residues 186–222 show a composition bias toward basic and acidic residues; the sequence is ETKKPPLKKGEKEKKKSNLELFKEELKQIQEERDERH. Residues 192–232 adopt a coiled-coil conformation; it reads LKKGEKEKKKSNLELFKEELKQIQEERDERHKTKGRLSRFE. Ser-202 is subject to Phosphoserine. Lys-208 is covalently cross-linked (Glycyl lysine isopeptide (Lys-Gly) (interchain with G-Cter in SUMO2)). The residue at position 236 (Ser-236) is a Phosphoserine. Positions 239 to 249 are enriched in basic and acidic residues; sequence DGQRRSMDAPS. The region spanning 273–354 is the RRM domain; the sequence is TNLYLGNINP…FEMKLGWGKA (82 aa). The stretch at 429 to 472 is one SURP motif repeat; sequence LIHRMIEFVVREGPMFEAMIMNREINNPMFRFLFENQTPAHVYY. Ser-484 carries the phosphoserine modification. In terms of domain architecture, CID spans 533–678; the sequence is LKEEQRDKLE…KLQNIFLGLV (146 aa). Position 718 is a phosphothreonine (Thr-718). Glycyl lysine isopeptide (Lys-Gly) (interchain with G-Cter in SUMO2) cross-links involve residues Lys-747 and Lys-748. Residue Lys-759 is modified to N6-acetyllysine; alternate. Residue Lys-759 forms a Glycyl lysine isopeptide (Lys-Gly) (interchain with G-Cter in SUMO2); alternate linkage. Disordered stretches follow at residues 777-840 and 854-1028; these read KWEL…EEKR and QDEL…KNKH. Residues 779 to 809 adopt a coiled-coil conformation; that stretch reads ELFDQHEESEEEENQNQEEESEDEEDTQSSK. Residues 785 to 805 are compositionally biased toward acidic residues; that stretch reads EESEEEENQNQEEESEDEEDT. A phosphoserine mark is found at Ser-787, Ser-799, and Ser-810. 2 stretches are compositionally biased toward basic and acidic residues: residues 809 to 840 and 873 to 921; these read KSEE…EEKR and QVEH…TPTR. Glycyl lysine isopeptide (Lys-Gly) (interchain with G-Cter in SUMO2) cross-links involve residues Lys-821, Lys-828, and Lys-831. Residues 836-914 adopt a coiled-coil conformation; that stretch reads SEEKRAKLRE…ESRSKDEKEK (79 aa). Phosphothreonine is present on Thr-930. A phosphoserine mark is found at Ser-945 and Ser-947. Basic and acidic residues predominate over residues 949–979; sequence KSERSERSERSHKESSRSRSSHKDSPRDVSK. The span at 990–1028 shows a compositional bias: basic residues; that stretch reads TPKRSRRSRSRSPKKSGKKSRSQSRSPHRSHKKSKKNKH.

Belongs to the splicing factor SR family. Interacts with ERBB4.

It localises to the nucleus. The protein is U2 snRNP-associated SURP motif-containing protein (U2SURP) of Pongo abelii (Sumatran orangutan).